Reading from the N-terminus, the 32-residue chain is MSDINVTRLPGFVPILFPCVGDDVNTALTRGE.

A propeptide spanning residues 1–10 (MSDINVTRLP) is cleaved from the precursor. The segment at residues 11–18 (GFVPILFP) is a cross-link (cyclopeptide (Gly-Pro)). The propeptide occupies 19 to 32 (CVGDDVNTALTRGE).

This sequence belongs to the MSDIN fungal toxin family. In terms of processing, processed by the macrocyclase-peptidase enzyme POPB to yield a toxic cyclic octapeptide. POPB first removes 10 residues from the N-terminus. Conformational trapping of the remaining peptide forces the enzyme to release this intermediate rather than proceed to macrocyclization. The enzyme rebinds the remaining peptide in a different conformation and catalyzes macrocyclization of the N-terminal 8 residues.

Its function is as follows. Probable toxin that belongs to the MSDIN-like toxin family responsible for a large number of food poisoning cases and deaths. The protein is MSDIN-like toxin proprotein 1 of Amanita bisporigera (Destroying angel).